Here is a 384-residue protein sequence, read N- to C-terminus: Beta-lactamase (384 aa).

The signal sequence occupies residues 1 to 29; that stretch reads MDNSMKNIFRQGRLFIALSLAMTSISAFA. The Acyl-ester intermediate role is filled by serine 87. The active-site Proton acceptor is the tyrosine 172. 337–339 serves as a coordination point for substrate; the sequence is KTG.

The protein belongs to the class-C beta-lactamase family.

The protein localises to the periplasm. It carries out the reaction a beta-lactam + H2O = a substituted beta-amino acid. Functionally, this protein is a serine beta-lactamase with a substrate specificity for cephalosporins. The protein is Beta-lactamase (ampC) of Providencia stuartii.